We begin with the raw amino-acid sequence, 314 residues long: tRNA pseudouridine synthase B (314 aa).

The Nucleophile role is filled by Asp-47.

The protein belongs to the pseudouridine synthase TruB family. Type 1 subfamily.

It catalyses the reaction uridine(55) in tRNA = pseudouridine(55) in tRNA. Responsible for synthesis of pseudouridine from uracil-55 in the psi GC loop of transfer RNAs. The protein is tRNA pseudouridine synthase B of Vibrio campbellii (strain ATCC BAA-1116).